The primary structure comprises 404 residues: Argininosuccinate synthase (404 aa).

ATP is bound by residues 9–17 (AYSGGLDTS) and Ala36. Residue Tyr87 coordinates L-citrulline. Position 117 (Gly117) interacts with ATP. Positions 119, 123, and 124 each coordinate L-aspartate. Asn123 serves as a coordination point for L-citrulline. L-citrulline is bound by residues Arg127, Ser176, and Glu261.

It belongs to the argininosuccinate synthase family. Type 1 subfamily. Homotetramer.

It localises to the cytoplasm. The enzyme catalyses L-citrulline + L-aspartate + ATP = 2-(N(omega)-L-arginino)succinate + AMP + diphosphate + H(+). It participates in amino-acid biosynthesis; L-arginine biosynthesis; L-arginine from L-ornithine and carbamoyl phosphate: step 2/3. This is Argininosuccinate synthase from Burkholderia pseudomallei (strain K96243).